Here is a 330-residue protein sequence, read N- to C-terminus: Aspartate--ammonia ligase (330 aa).

Belongs to the class-II aminoacyl-tRNA synthetase family. AsnA subfamily.

Its subcellular location is the cytoplasm. It catalyses the reaction L-aspartate + NH4(+) + ATP = L-asparagine + AMP + diphosphate + H(+). Its pathway is amino-acid biosynthesis; L-asparagine biosynthesis; L-asparagine from L-aspartate (ammonia route): step 1/1. This is Aspartate--ammonia ligase from Salmonella paratyphi A (strain ATCC 9150 / SARB42).